The chain runs to 194 residues: Glycerol-3-phosphate acyltransferase (194 aa).

The next 5 helical transmembrane spans lie at 4–24 (EIVL…LLLA), 78–98 (EIWV…TVFL), 110–130 (LGVF…IFVF), 137–157 (YVSL…ALIE), and 161–181 (LLIT…RENI).

It belongs to the PlsY family. Probably interacts with PlsX.

It is found in the cell inner membrane. The enzyme catalyses an acyl phosphate + sn-glycerol 3-phosphate = a 1-acyl-sn-glycero-3-phosphate + phosphate. Its pathway is lipid metabolism; phospholipid metabolism. Catalyzes the transfer of an acyl group from acyl-phosphate (acyl-PO(4)) to glycerol-3-phosphate (G3P) to form lysophosphatidic acid (LPA). This enzyme utilizes acyl-phosphate as fatty acyl donor, but not acyl-CoA or acyl-ACP. This is Glycerol-3-phosphate acyltransferase from Geotalea daltonii (strain DSM 22248 / JCM 15807 / FRC-32) (Geobacter daltonii).